A 673-amino-acid chain; its full sequence is Capsid protein (673 aa).

Residues N575 to K595 are disordered.

It belongs to the anelloviridae capsid protein family.

It localises to the virion. Its function is as follows. Self-assembles to form an icosahedral capsid with a T=1 symmetry, about 30 nm in diameter, and consisting of 60 capsid proteins. The capsid encapsulates the genomic DNA. Capsid protein is involved in attachment and entry into the host cell. The protein is Capsid protein of Homo sapiens (Human).